Here is a 407-residue protein sequence, read N- to C-terminus: Arginine deiminase (407 aa).

The Amidino-cysteine intermediate role is filled by C397.

This sequence belongs to the arginine deiminase family.

It is found in the cytoplasm. The catalysed reaction is L-arginine + H2O = L-citrulline + NH4(+). The protein operates within amino-acid degradation; L-arginine degradation via ADI pathway; carbamoyl phosphate from L-arginine: step 1/2. This Vibrio parahaemolyticus serotype O3:K6 (strain RIMD 2210633) protein is Arginine deiminase.